Consider the following 244-residue polypeptide: Guanine nucleotide exchange factor rei-1 (244 aa).

2 coiled-coil regions span residues 6-39 (DQLISIRKQLENLNNATDDINSYEMKLETVKKQF) and 81-144 (VQQA…KAEK). The disordered stretch occupies residues 221 to 244 (DQIHQERSSQSSLAPSSDAESDSS). Over residues 228-238 (SSQSSLAPSSD) the composition is skewed to low complexity.

Belongs to the SH3BP5 family. Homodimer, tetramer and multimer. Interacts with rab-11.1. Binds preferentially to the GDP-bound form of rab-11.1. In terms of tissue distribution, expressed in germ cells.

It is found in the cytoplasmic granule. Its subcellular location is the golgi apparatus membrane. Functionally, guanine nucleotide exchange factor for Rab GTPase Rab-11.1. Spatially and temporally regulates the distribution of Rab-11.1 to target membranes during embryogenesis. Plays a role in cytokinesis, probably by targeting rab-11.1 to the cleavage furrows. This Caenorhabditis elegans protein is Guanine nucleotide exchange factor rei-1.